A 146-amino-acid chain; its full sequence is MWPAPCSVGRLLIFFMCSSSGYVVQGCGPSPGARTTLGSPLSLWSIKTPSHIFCTRRAINLGFPSPPLVQLIFWSLNAGLDLYLCLISSCGFSQVFWPVEAFCSFSLSFFALALSHKFVICRLDQHIFSGFTKSLKNLPPCHRTDI.

Positions 1–26 (MWPAPCSVGRLLIFFMCSSSGYVVQG) are cleaved as a signal peptide. At 27 to 66 (CGPSPGARTTLGSPLSLWSIKTPSHIFCTRRAINLGFPSP) the chain is on the extracellular side. The helical transmembrane segment at 67–87 (PLVQLIFWSLNAGLDLYLCLI) threads the bilayer. Topologically, residues 88-94 (SSCGFSQ) are cytoplasmic. Residues 95 to 115 (VFWPVEAFCSFSLSFFALALS) traverse the membrane as a helical segment. The Extracellular segment spans residues 116–146 (HKFVICRLDQHIFSGFTKSLKNLPPCHRTDI).

In terms of assembly, homodimer. Interacts with DNAJB4. As to expression, expressed in brain with higher detection in neurons than astrocytes. Decreased expression in Alzheimer brains. Detected at protein level in brain and cervix.

It is found in the membrane. Its function is as follows. Promotes neuronal cells survival to stress conditions. The protein is Stress-responsive DNAJB4-interacting membrane protein 1 (SDIM1) of Homo sapiens (Human).